A 243-amino-acid polypeptide reads, in one-letter code: Probable flavin-dependent thymidylate synthase (243 aa).

The ThyX domain occupies 21–239; the sequence is FEVDDFEESK…PNTYQDIPDV (219 aa). FAD is bound by residues Ser80 and 103–105; that span reads RHR. DUMP is bound by residues 100-103, 113-115, and Arg178; these read ELER and SQR. Residues 103 to 113 carry the ThyX motif motif; that stretch reads RHRHLSFSVVS. 194 to 196 is a binding site for FAD; sequence NHR. Residue Arg205 participates in dUMP binding. The active-site Involved in ionization of N3 of dUMP, leading to its activation is Arg205.

Belongs to the thymidylate synthase ThyX family. As to quaternary structure, homotetramer. It depends on FAD as a cofactor.

It catalyses the reaction dUMP + (6R)-5,10-methylene-5,6,7,8-tetrahydrofolate + NADPH + H(+) = dTMP + (6S)-5,6,7,8-tetrahydrofolate + NADP(+). It participates in pyrimidine metabolism; dTTP biosynthesis. In terms of biological role, catalyzes the reductive methylation of 2'-deoxyuridine-5'-monophosphate (dUMP) to 2'-deoxythymidine-5'-monophosphate (dTMP) while utilizing 5,10-methylenetetrahydrofolate (mTHF) as the methyl donor, and NADPH and FADH(2) as the reductant. The protein is Probable flavin-dependent thymidylate synthase (48) of Mycobacterium phage L5 (Mycobacteriophage L5).